The primary structure comprises 489 residues: Metal cation symporter ZIP14 (489 aa).

Residues 1–28 (MKRLHPALPSCLLLVLFGIWRTAPQTHA) form the signal peptide. Over 29-155 (SSAGLPPLSA…PSAIEVWGYG (127 aa)) the chain is Extracellular. N-linked (GlcNAc...) asparagine glycans are attached at residues asparagine 52, asparagine 75, asparagine 85, and asparagine 100. A helical transmembrane segment spans residues 156 to 176 (FLCVTVISLCSLMGASVVPFM). At 177–184 (KKTFYKRL) the chain is on the cytoplasmic side. The helical transmembrane segment at 185–205 (LLYFIALAIGTLYSNALFQLI) threads the bilayer. The Extracellular portion of the chain corresponds to 206–221 (PEAFGFNPQDNYVSKS). The chain crosses the membrane as a helical span at residues 222–242 (AVVFGGFYLFFFTEKILKMLL). Residues 243–349 (KQKNEHHHGH…SDGLHNFIDG (107 aa)) are Cytoplasmic-facing. Residues 248–255 (HHHGHNHF) carry the HHHGHXHX-motif motif. A helical transmembrane segment spans residues 350-370 (LAIGASFTVSVFQGISTSVAI). Over 371-394 (LCEEFPHELGDFVILLNAGMSIQQ) the chain is Extracellular. The XEXPHE-motif signature appears at 373-378 (EEFPHE). Residues 395–415 (ALFFNFLSACCCYLGLAFGIL) form a helical membrane-spanning segment. Residues 416-421 (AGSHFS) lie on the Cytoplasmic side of the membrane. The chain crosses the membrane as a helical span at residues 422–442 (ANWIFALAGGMFLYIALADMF). The Extracellular segment spans residues 443-457 (PEMNEVCQEDEKNDS). Residues 458-478 (FLVPFVIQNLGLLTGFSIMLV) form a helical membrane-spanning segment. Over 479-489 (LTMYSGQIQIG) the chain is Cytoplasmic.

The protein belongs to the ZIP transporter (TC 2.A.5) family. As to quaternary structure, homotrimer. Ubiquitinated. Ubiquitination occurs upon iron depletion. The ubiquitinated form undergoes proteasomal degradation. Post-translationally, N-glycosylated. N-glycosylation at Asn-100 is required for iron-regulated extraction of the transporter from membranes and subsequent proteasomal degradation. As to expression, widely expressed. Highly and transiently expressed during the early stage of adipocyte differentiation. Strongly expressed in liver, preadipocyte, duodenum and jejunum, moderately in brain, heart, skeletal muscle, spleen, pancreas, kidney and white adipose cells. Expression is almost undetectable in lung, testis and brown adipose cells. Expressed by chondrocytes and pituitary cells. In terms of tissue distribution, more strongly expressed in brain. More strongly expressed in liver, kidney and duodenum.

Its subcellular location is the cell membrane. It localises to the apical cell membrane. The protein resides in the basolateral cell membrane. It is found in the early endosome membrane. The protein localises to the late endosome membrane. Its subcellular location is the lysosome membrane. The enzyme catalyses Zn(2+)(out) + 2 hydrogencarbonate(out) = Zn(2+)(in) + 2 hydrogencarbonate(in). The catalysed reaction is Mn(2+)(out) + 2 hydrogencarbonate(out) = Mn(2+)(in) + 2 hydrogencarbonate(in). It catalyses the reaction Fe(2+)(out) + 2 hydrogencarbonate(out) = Fe(2+)(in) + 2 hydrogencarbonate(in). It carries out the reaction Cd(2+)(out) + 2 hydrogencarbonate(out) = Cd(2+)(in) + 2 hydrogencarbonate(in). Inhibited by cyanide and therefore dependent of an energy source. Inhibited by DIDS/4,4'-diisothiocyanatostilbene-2,2'-disulfonic acid, an inhibitor hydrogencarbonate-dependent transporters. In terms of biological role, electroneutral transporter of the plasma membrane mediating the cellular uptake of the divalent metal cations zinc, manganese and iron that are important for tissue homeostasis, metabolism, development and immunity. Functions as an energy-dependent symporter, transporting through the membranes an electroneutral complex composed of a divalent metal cation and two bicarbonate anions. Beside these endogenous cellular substrates, can also import cadmium a non-essential metal which is cytotoxic and carcinogenic. Controls the cellular uptake by the intestinal epithelium of systemic zinc, which is in turn required to maintain tight junctions and the intestinal permeability. Modifies the activity of zinc-dependent phosphodiesterases, thereby indirectly regulating G protein-coupled receptor signaling pathways important for gluconeogenesis and chondrocyte differentiation. Regulates insulin receptor signaling, glucose uptake, glycogen synthesis and gluconeogenesis in hepatocytes through the zinc-dependent intracellular catabolism of insulin. Through zinc cellular uptake also plays a role in the adaptation of cells to endoplasmic reticulum stress. Major manganese transporter of the basolateral membrane of intestinal epithelial cells, it plays a central role in manganese systemic homeostasis through intestinal manganese uptake. Also involved in manganese extracellular uptake by cells of the blood-brain barrier. May also play a role in manganese and zinc homeostasis participating in their elimination from the blood through the hepatobiliary excretion. Also functions in the extracellular uptake of free iron. May also function intracellularly and mediate the transport from endosomes to cytosol of iron endocytosed by transferrin. Plays a role in innate immunity by regulating the expression of cytokines by activated macrophages. This is Metal cation symporter ZIP14 from Mus musculus (Mouse).